The primary structure comprises 261 residues: MLICNDKFNPKTLLEEIMALRPWRKGPFEISQIKIDSEWDSSIKWDLVKNATPLKDKVVADVGCNNGYYLFKMLEHGPKSLVGFDPGVLVKKQFEFLAPFFDKEKKIIYESLGVEDLHEKYSNAFDVIFCLGVLYHRKSPLEALKALYHALKIRGELVLDTLIIDSPLDIALCPKKTYAKMKNVYFIPSVSALKGWCERVGFENFEVLSVLKTTPKEQRKTDFILGQSLEDFLDKTDHSKTLEGYDAPLRGYFKMLKPSKR.

Carboxy-S-adenosyl-L-methionine-binding positions include Lys-25, Trp-39, Lys-44, Gly-63, 114–115 (VE), Tyr-135, and Arg-250.

Belongs to the class I-like SAM-binding methyltransferase superfamily. CmoB family. Homotetramer.

It catalyses the reaction carboxy-S-adenosyl-L-methionine + 5-hydroxyuridine(34) in tRNA = 5-carboxymethoxyuridine(34) in tRNA + S-adenosyl-L-homocysteine + H(+). Catalyzes carboxymethyl transfer from carboxy-S-adenosyl-L-methionine (Cx-SAM) to 5-hydroxyuridine (ho5U) to form 5-carboxymethoxyuridine (cmo5U) at position 34 in tRNAs. The sequence is that of tRNA U34 carboxymethyltransferase from Helicobacter pylori (strain G27).